We begin with the raw amino-acid sequence, 752 residues long: Zinc finger BED domain-containing protein RICESLEEPER 3 (752 aa).

Residues 106–166 (RKKSVVWEHF…ASCPMLKNED (61 aa)) form a BED-type zinc finger. Positions 129, 132, 153, and 159 each coordinate Zn(2+). Residues 647-733 (ELEQYLEEAL…EALFCAKDWL (87 aa)) are HATC (Hobo-Ac-Tam3) domain.

Homodimer.

It localises to the nucleus. Its function is as follows. Transposase-like protein that is essential for plant growth and development. May regulate global gene expression by recruiting other cellular factors. This Oryza sativa subsp. japonica (Rice) protein is Zinc finger BED domain-containing protein RICESLEEPER 3.